Reading from the N-terminus, the 1544-residue chain is Lysine-specific demethylase 5B (1544 aa).

Positions 1-14 are enriched in pro residues; it reads MEPATTLPPGPRPA. Positions 1–22 are disordered; sequence MEPATTLPPGPRPALPLGGPGP. A JmjN domain is found at 32 to 73; that stretch reads CPVFEPSWEEFADPFAFIHKIRPIAEQTGICKVRPPPDWQPP. The 91-residue stretch at 97–187 folds into the ARID domain; the sequence is TRVKLNFLDQ…ILNPYNLFLS (91 aa). Glycyl lysine isopeptide (Lys-Gly) (interchain with G-Cter in SUMO2) cross-links involve residues Lys148, Lys204, Lys209, Lys242, Lys274, and Lys278. Residues 200–228 are disordered; that stretch reads TSDTKDKEYKPHDIPQRQSVQPAETCPPA. The segment covering 202–214 has biased composition (basic and acidic residues); that stretch reads DTKDKEYKPHDIP. The disordered stretch occupies residues 269–297; sequence NEKEMKSTIKQEPTEKKDCELESEKEKPK. The PHD-type 1 zinc-finger motif lies at 309–359; it reads LYVCLLCGSGNDEDRLLLCDGCDDSYHTFCLVPPLHDVPKGDWRCPKCLAQ. Tyr425 contacts 2-oxoglutarate. Residues 453-619 form the JmjC domain; that stretch reads EYLDSGWNLN…LGRQCVEHYR (167 aa). Fe cation is bound by residues His499 and Glu501. Residues Ser507, Asn509, and Lys517 each contribute to the 2-oxoglutarate site. His587 lines the Fe cation pocket. The C5HC2 zinc finger occupies 692 to 744; it reads CIKCKTTCFMSAISCSCKPGLLVCLHHVKELCSCPPYKYNLRYRYTLDDLYPM. Residue Lys769 forms a Glycyl lysine isopeptide (Lys-Gly) (interchain with G-Cter in SUMO2) linkage. Lys832 is subject to N6-acetyllysine. The residue at position 986 (Ser986) is a Phosphoserine. A PHD-type 2 zinc finger spans residues 1176–1224; it reads MKVCLCQKTPATPMIQCELCRDAFHTSCVAAPSISQSSRIWLCPHCRRS. The span at 1297 to 1314 shows a compositional bias: polar residues; sequence QASATDKVSQPPGTTSFS. The tract at residues 1297–1318 is disordered; the sequence is QASATDKVSQPPGTTSFSLPDD. At Ser1328 the chain carries Phosphoserine. Residues 1374-1388 show a composition bias toward polar residues; that stretch reads PSSVQQADRSSPVRS. Residues 1374 to 1447 form a disordered region; that stretch reads PSSVQQADRS…IKLSHPKDMD (74 aa). A compositionally biased stretch (basic and acidic residues) spans 1389–1427; that stretch reads SSEKNDCLRGKRDAINSPERKLKRRPEREGLPSERWDRV. Positions 1428–1441 are enriched in basic residues; that stretch reads KHMRTPQKKKIKLS. Lys1450 is covalently cross-linked (Glycyl lysine isopeptide (Lys-Gly) (interchain with G-Cter in SUMO2)). Residue Ser1456 is modified to Phosphoserine. The PHD-type 3 zinc-finger motif lies at 1484 to 1538; that stretch reads DAICPAVSCLQPEGDEVDWVQCDGSCNQWFHQVCVGVSPEMAEKEDYICVRCTGK.

The protein belongs to the JARID1 histone demethylase family. As to quaternary structure, interacts with FOXG1B, PAX9, MYC, MYCN and RB1. Interacts with HDAC1, HDAC4, HDAC5 and HDAC7. Interacts (via PHD-type 1 zinc finger) with histone H3 unmodified at 'Lys-4'; the interaction is inhibited when histone H3 is methylated at 'Arg-2' or 'Lys-4'. Fe(2+) is required as a cofactor. In terms of tissue distribution, present at highest levels in testis, where it is enriched in spermatogonia and pachytene cells (at protein level).

Its subcellular location is the nucleus. It catalyses the reaction N(6),N(6),N(6)-trimethyl-L-lysyl(4)-[histone H3] + 3 2-oxoglutarate + 3 O2 = L-lysyl(4)-[histone H3] + 3 formaldehyde + 3 succinate + 3 CO2. Its function is as follows. Histone demethylase that demethylates 'Lys-4' of histone H3, thereby playing a central role in histone code. Does not demethylate histone H3 'Lys-9' or H3 'Lys-27'. Demethylates trimethylated, dimethylated and monomethylated H3 'Lys-4'. Acts as a transcriptional corepressor for FOXG1B and PAX9. Represses the CLOCK-BMAL1 heterodimer-mediated transcriptional activation of the core clock component PER2. The chain is Lysine-specific demethylase 5B (Kdm5b) from Mus musculus (Mouse).